We begin with the raw amino-acid sequence, 1025 residues long: Exportin-T (1025 aa).

This sequence belongs to the exportin family.

Its subcellular location is the nucleus. It is found in the cytoplasm. In terms of biological role, tRNA nucleus export receptor which facilitates tRNA translocation across the nuclear pore complex. Involved in pre-tRNA splicing, probably by affecting the interaction of pre-tRNA with splicing endonuclease. The polypeptide is Exportin-T (LOS1) (Candida albicans (strain SC5314 / ATCC MYA-2876) (Yeast)).